A 468-amino-acid chain; its full sequence is Glutamate--tRNA ligase (468 aa).

The 'HIGH' region motif lies at 12-22; it reads PSPTGMMHIGT. Residues 238–242 carry the 'KMSKS' region motif; it reads KLSKR. An ATP-binding site is contributed by Lys-241.

The protein belongs to the class-I aminoacyl-tRNA synthetase family. Glutamate--tRNA ligase type 1 subfamily. Monomer.

It is found in the cytoplasm. The catalysed reaction is tRNA(Glu) + L-glutamate + ATP = L-glutamyl-tRNA(Glu) + AMP + diphosphate. Catalyzes the attachment of glutamate to tRNA(Glu) in a two-step reaction: glutamate is first activated by ATP to form Glu-AMP and then transferred to the acceptor end of tRNA(Glu). The protein is Glutamate--tRNA ligase of Phenylobacterium zucineum (strain HLK1).